A 4085-amino-acid polypeptide reads, in one-letter code: Replicase polyprotein 1a (4085 aa).

One can recognise a CoV Nsp1 globular domain in the interval 2–109 (ACNRVTLAVA…EFDVVFGKRG (108 aa)). The region spanning 113-359 (VTYTDQYLCG…RNSVTDECRL (247 aa)) is the CoV Nsp2 N-terminal domain. Residues C246, C248, C265, and C266 each coordinate Zn(2+). Positions 246–266 (CTCGTKSWSVGDWTGFKSSCC) are C4. The CoV Nsp2 middle domain maps to 389–775 (YDDIFAESKP…LEAYNAFLDT (387 aa)). The 125-residue stretch at 773 to 897 (LDTVVSTVKI…LPVAFTKAAG (125 aa)) folds into the CoV Nsp2 C-terminal domain. Positions 898–993 (GKVSFSDDVE…VMISEWPLSV (96 aa)) constitute a Ubiquitin-like 1 domain. The Peptidase C16 1 domain occupies 1016-1268 (VNSIFDIETV…DTTPKEEFVV (253 aa)). The active-site For PL1-PRO activity is the C1054. The C4-type 1; degenerate zinc finger occupies 1126–1157 (CSCTSGRLEESGAVLFCTPTKKAFPYGTCLNC). Catalysis depends on for PL1-PRO activity residues H1205 and D1218. The region spanning 1269-1436 (KEKLNAFLVH…KVKDFVSGLV (168 aa)) is the Macro domain. A Ubiquitin-like 2 domain is found at 1600–1655 (AKVITIKVTEDGVNVHDVTVTTDKSFEQQVGVIADKDKDLSGAVPSDLNTSELLTK). Residues 1663-1914 (EFYGFKDAVT…TVKPKPVINQ (252 aa)) form the Peptidase C16 2 domain. The active-site For PL2-PRO activity is the C1701. 4 residues coordinate Zn(2+): C1780, C1783, C1813, and H1815. The C4-type 2; atypical zinc-finger motif lies at 1780-1815 (CVECDAKFKNSVASINSAIVCASVKRDGVQVGYCVH). Residues H1863 and D1868 each act as for PL2-PRO activity in the active site. The segment at 1925-2115 (FGDFLIHNFV…STVGVFLGYK (191 aa)) is HD1. Residues 1998–2018 (LLLLIYTLYSVVLLCVRFGPF) form a helical membrane-spanning segment. The 3Ecto domain maps to 2005-2070 (LYSVVLLCVR…LDVVWKHITD (66 aa)). 2 disulfide bridges follow: C2021–C2048 and C2039–C2045. 2 helical membrane passes run 2068-2088 (ITDP…LLIF) and 2095-2115 (CFLL…LGYK). The tract at residues 2144–2234 (SFVRHVLFGC…ITKTNVQPTG (91 aa)) is Y1. In terms of domain architecture, CoV Nsp3 Y spans 2144-2483 (SFVRHVLFGC…PATSIVAKQG (340 aa)). Zn(2+) contacts are provided by H2148, C2153, C2158, C2161, C2194, H2197, C2201, and C2204. The segment at 2148 to 2161 (HVLFGCENPDCIAC) is ZF1. A ZF2 region spans residues 2194–2204 (CKKHRFFCVDC). Residues 2235–2324 (PAYVMIDKVE…LVDSELLSTL (90 aa)) form a Y2 region. Residues 2235–2483 (PAYVMIDKVE…PATSIVAKQG (249 aa)) form a coV-Y region. The segment at 2325–2381 (SVDFNGVLHKAYIDVLRNSFGKDLNANMSLAECKRALGLSISDHEFTSAISNAHRCD) is Y3. The segment at 2382–2483 (VLLSDLSFNN…PATSIVAKQG (102 aa)) is Y4. Helical transmembrane passes span 2491 to 2511 (LTWL…LCFF), 2731 to 2751 (LWNL…VAAM), 2755 to 2775 (ILLN…VTKF), 2782 to 2802 (LSVG…SYIV), 2809 to 2829 (MIAY…AWIW), and 2834 to 2854 (LIAY…LAML). Residues 2491–2854 (LTWLWLLCGL…LCAWYFLAML (364 aa)) form an HD2 region. Residues 2870-2965 (LFEGDKFVGT…PTVSYGSTLQ (96 aa)) enclose the Nsp4C domain. Positions 2966 to 3267 (AGLRKMAQPS…VKQMFGVNLQ (302 aa)) constitute a Peptidase C30 domain. Catalysis depends on for 3CL-PRO activity residues H3006 and C3109. 7 consecutive transmembrane segments (helical) span residues 3281-3301 (FAGF…TIWV), 3304-3324 (GFLT…TFVV), 3328-3348 (VLFL…QNCA), 3367-3387 (VMQM…VALL), 3401-3421 (CTYL…YDYV), 3422-3442 (SLLV…AIIF), and 3467-3487 (LLFY…LYWI). Positions 3281-3487 (FAGFFVMFWA…CMYYGLLYWI (207 aa)) are HD3. The region spanning 3547-3629 (SKLTDLKCTN…SYFENDSILQ (83 aa)) is the RdRp Nsp7 cofactor domain. A RdRp Nsp8 cofactor domain is found at 3630–3824 (SVASSFVGMP…LTCERVVKLQ (195 aa)). In terms of domain architecture, Nsp9 ssRNA-binding spans 3825–3933 (NNEIMPGKMK…GYIGATVRLQ (109 aa)). In terms of domain architecture, ExoN/MTase coactivator spans 3934 to 4072 (AGKQTEFVSN…DRTAIQSFDN (139 aa)). Positions 4007, 4010, 4016, 4023, 4049, 4052, 4060, and 4062 each coordinate Zn(2+). 2 zinc fingers span residues 4007–4023 (CIYC…DGFC) and 4049–4062 (CKVC…GCTC).

This sequence belongs to the coronaviruses polyprotein 1ab family. In terms of assembly, 3CL-PRO exists as monomer and homodimer. Eight copies of nsp7 and eight copies of nsp8 assemble to form a heterohexadecamer. Nsp9 is a dimer. Nsp10 forms a dodecamer. Specific enzymatic cleavages in vivo by its own proteases yield mature proteins. 3CL-PRO and PL-PRO proteinases are autocatalytically processed.

Its subcellular location is the host membrane. The protein resides in the host cytoplasm. It localises to the host perinuclear region. The catalysed reaction is Thiol-dependent hydrolysis of ester, thioester, amide, peptide and isopeptide bonds formed by the C-terminal Gly of ubiquitin (a 76-residue protein attached to proteins as an intracellular targeting signal).. In terms of biological role, the papain-like proteinase 1 (PLP1) and papain-like proteinase 2 (PLP2) are responsible for the cleavages located at the N-terminus of the replicase polyprotein. In addition, PLP2 possesses a deubiquitinating/deISGylating activity and processes both 'Lys-48'- and 'Lys-63'-linked polyubiquitin chains from cellular substrates. PLP2 also antagonizes innate immune induction of type I interferon by blocking the nuclear translocation of host IRF-3. Functionally, responsible for the majority of cleavages as it cleaves the C-terminus of replicase polyprotein at 11 sites. Recognizes substrates containing the core sequence [ILMVF]-Q-|-[SGACN]. Inhibited by the substrate-analog Cbz-Val-Asn-Ser-Thr-Leu-Gln-CMK. Also contains an ADP-ribose-1''-phosphate (ADRP)-binding function. Its function is as follows. Nsp7-nsp8 hexadecamer may possibly confer processivity to the polymerase, maybe by binding to dsRNA or by producing primers utilized by the latter. Nsp9 is a ssRNA-binding protein. This is Replicase polyprotein 1a from Homo sapiens (Human).